Reading from the N-terminus, the 628-residue chain is Growth hormone receptor (628 aa).

A signal peptide spans 1-18 (MDLWQLLLTLAVVGSSNA). Topologically, residues 19–266 (FVGREAVTVT…FTCEEEFQFP (248 aa)) are extracellular. Residues N33, N40, and N46 are each glycosylated (N-linked (GlcNAc...) asparagine). 2 disulfide bridges follow: C56-C66 and C101-C112. Residue N115 is glycosylated (N-linked (GlcNAc...) asparagine). A disulfide bridge connects residues C126 and C140. Residues 151 to 254 (PPTGLNWTLM…EILYITLPQS (104 aa)) enclose the Fibronectin type-III domain. Residues N156, N161, and N200 are each glycosylated (N-linked (GlcNAc...) asparagine). The WSXWS motif signature appears at 240 to 244 (YGEFS). A helical membrane pass occupies residues 267-287 (WFLIMIFGIFGLTVMLLVVMF). At 288-628 (SKQQRIKMLI…STDQLNKIML (341 aa)) the chain is on the cytoplasmic side. Residues 294–379 (KMLILPPVPV…HQKSLNILGA (86 aa)) form a required for JAK2 binding region. The Box 1 motif motif lies at 297–305 (ILPPVPVPK). Residues 340-349 (DSWVEFIELD) carry the UbE motif motif. At S341 the chain carries Phosphoserine. 2 positions are modified to phosphotyrosine: Y483 and Y585.

Belongs to the type I cytokine receptor family. Type 1 subfamily. In terms of assembly, on growth hormone (GH) binding, forms homodimers and binds JAK2 via a box 1-containing domain. The soluble form (GHBP) is produced by phorbol ester-promoted proteolytic cleavage at the cell surface (shedding) by ADAM17/TACE. Shedding is inhibited by growth hormone (GH) binding to the receptor probably due to a conformational change in GHR rendering the receptor inaccessible to ADAM17. In terms of processing, on GH binding, phosphorylated on tyrosine residues in the cytoplasmic domain by JAK2. Post-translationally, ubiquitinated by the ECS(SOCS2) complex following ligand-binding and phosphorylation by JAK2, leading to its degradation by the proteasome. Regulation by the ECS(SOCS2) complex acts as a negative feedback loop of growth hormone receptor signaling. Ubiquitination is not sufficient for GHR internalization.

The protein localises to the cell membrane. The protein resides in the secreted. In terms of biological role, receptor for pituitary gland growth hormone (GH1) involved in regulating postnatal body growth. On ligand binding, couples to the JAK2/STAT5 pathway. The soluble form (GHBP) acts as a reservoir of growth hormone in plasma and may be a modulator/inhibitor of GH signaling. The sequence is that of Growth hormone receptor (GHR) from Cavia porcellus (Guinea pig).